We begin with the raw amino-acid sequence, 352 residues long: C-C chemokine receptor type 5 (352 aa).

Over 1–30 (MDYQVSSPTYDIDYYTSEPCQKINVKQIAG) the chain is Extracellular. The residue at position 3 (Tyr3) is a Sulfotyrosine. O-linked (GalNAc...) serine glycosylation is found at Ser6 and Ser7. 3 positions are modified to sulfotyrosine: Tyr10, Tyr14, and Tyr15. Intrachain disulfides connect Cys20–Cys269 and Cys101–Cys178. The chain crosses the membrane as a helical span at residues 31–58 (RLLPPLYSLVFIFGFVGNILVVLILINC). At 59–68 (KRLKSMTDIY) the chain is on the cytoplasmic side. A helical transmembrane segment spans residues 69 to 89 (LLNLAISDLLFLLTVPFWAHY). The Extracellular segment spans residues 90-102 (AAAQWDFGNTMCQ). The chain crosses the membrane as a helical span at residues 103–124 (LLTGLYFIGFFSGIFFIILLTI). Residues 125 to 141 (DRYLAIVHAVFALKART) lie on the Cytoplasmic side of the membrane. Residues 142–166 (VTFGVVTSVITWVVAVFASLPGIIF) traverse the membrane as a helical segment. Residues 167–198 (TRSQREGLHYTCSSHFPYSQYQFWKNFQTLKI) lie on the Extracellular side of the membrane. The helical transmembrane segment at 199-218 (VILGLVLPLLVMVICYSGIL) threads the bilayer. The Cytoplasmic portion of the chain corresponds to 219-235 (KTLLRCRNEKKRHRAVR). The chain crosses the membrane as a helical span at residues 236–260 (LIFTIMIVYFLFWAPYNIVLLLNTF). Topologically, residues 261–277 (QEFFGLNNCSSSNRLDQ) are extracellular. Residues 278-301 (AMQVTETLGMTHCCINPIIYAFVG) form a helical membrane-spanning segment. The Cytoplasmic segment spans residues 302–352 (EKFRNYLLVFFQKHIAKRFCKCCSIFQQEAPERASSVYTRSTGEQEISVGL). 3 S-palmitoyl cysteine lipidation sites follow: Cys321, Cys323, and Cys324. Phosphoserine; by BARK1 is present on residues Ser336, Ser337, Ser342, and Ser349.

The protein belongs to the G-protein coupled receptor 1 family. As to quaternary structure, interacts with PRAF2. Efficient ligand binding to CCL3/MIP-1alpha and CCL4/MIP-1beta requires sulfation, O-glycosylation and sialic acid modifications. Glycosylation on Ser-6 is required for efficient binding of CCL4. Interacts with GRK2. Interacts with ARRB1 and ARRB2. Interacts with CNIH4. Interacts with S100A4; this interaction stimulates T-lymphocyte chemotaxis. Post-translationally, sulfated on at least 2 of the N-terminal tyrosines. Sulfation is required for efficient binding of the chemokines, CCL3 and CCL4. In terms of processing, palmitoylation in the C-terminal is important for cell surface expression. Phosphorylation on serine residues in the C-terminal is stimulated by binding CC chemokines especially by APO-RANTES. Post-translationally, O-glycosylated, but not N-glycosylated. Ser-6 appears to be the major site even if Ser-7 may be also O-glycosylated. Also sialylated glycans present which contribute to chemokine binding. Thr-16 and Ser-17 may also be glycosylated and, if so, with small moieties such as a T-antigen.

The protein localises to the cell membrane. In terms of biological role, receptor for a number of inflammatory CC-chemokines including CCL3/MIP-1-alpha, CCL4/MIP-1-beta and RANTES and subsequently transduces a signal by increasing the intracellular calcium ion level. May play a role in the control of granulocytic lineage proliferation or differentiation. Participates in T-lymphocyte migration to the infection site by acting as a chemotactic receptor. This chain is C-C chemokine receptor type 5 (CCR5), found in Theropithecus gelada (Gelada baboon).